The following is a 471-amino-acid chain: 3-isopropylmalate dehydratase large subunit (471 aa).

Cysteine 349, cysteine 410, and cysteine 413 together coordinate [4Fe-4S] cluster.

Belongs to the aconitase/IPM isomerase family. LeuC type 1 subfamily. In terms of assembly, heterodimer of LeuC and LeuD. [4Fe-4S] cluster serves as cofactor.

It catalyses the reaction (2R,3S)-3-isopropylmalate = (2S)-2-isopropylmalate. It participates in amino-acid biosynthesis; L-leucine biosynthesis; L-leucine from 3-methyl-2-oxobutanoate: step 2/4. In terms of biological role, catalyzes the isomerization between 2-isopropylmalate and 3-isopropylmalate, via the formation of 2-isopropylmaleate. The chain is 3-isopropylmalate dehydratase large subunit from Chromobacterium violaceum (strain ATCC 12472 / DSM 30191 / JCM 1249 / CCUG 213 / NBRC 12614 / NCIMB 9131 / NCTC 9757 / MK).